Reading from the N-terminus, the 266-residue chain is Zinc transporter ZupT (266 aa).

8 consecutive transmembrane segments (helical) span residues 8 to 28 (LLLTLLAGLSTGIGSAMALAV), 36 to 56 (LALSLGFSAGIMLYVSFMEII), 71 to 91 (AGAWVSTISFFGGMLFTWAID), 123 to 143 (GIFTAAAIAIHNFPEGMAVFF), 152 to 172 (GIVIASTIALHNIPEGMAVAV), 185 to 205 (FSLSFLSGLAEPLGALVGYTL), 209 to 229 (FLTPFVLGIVLASVSGIMVYI), and 246 to 266 (LAITGLIAGMAVMALSLLLLT). Fe(2+) is bound by residues Asn-134 and Glu-137. Zn(2+)-binding residues include Glu-137 and His-162. Fe(2+)-binding residues include Asn-163, Glu-166, and Glu-195. Residue Glu-166 participates in Zn(2+) binding.

The protein belongs to the ZIP transporter (TC 2.A.5) family. ZupT subfamily.

The protein localises to the cell inner membrane. The catalysed reaction is Zn(2+)(in) = Zn(2+)(out). In terms of biological role, mediates zinc uptake. May also transport other divalent cations. The sequence is that of Zinc transporter ZupT from Chlorobium luteolum (strain DSM 273 / BCRC 81028 / 2530) (Pelodictyon luteolum).